Consider the following 75-residue polypeptide: Defensin-like protein 59 (75 aa).

The N-terminal stretch at 1 to 19 (MNITKSYVVIFFLVMLTNS) is a signal peptide. Disulfide bonds link cysteine 39-cysteine 73, cysteine 43-cysteine 66, cysteine 52-cysteine 71, and cysteine 56-cysteine 72.

The protein belongs to the DEFL family.

The protein localises to the secreted. In Arabidopsis thaliana (Mouse-ear cress), this protein is Defensin-like protein 59.